The sequence spans 134 residues: Small ribosomal subunit protein uS8c (134 aa).

The protein belongs to the universal ribosomal protein uS8 family. Part of the 30S ribosomal subunit.

The protein localises to the plastid. The protein resides in the chloroplast. Its function is as follows. One of the primary rRNA binding proteins, it binds directly to 16S rRNA central domain where it helps coordinate assembly of the platform of the 30S subunit. The protein is Small ribosomal subunit protein uS8c (rps8) of Aethionema cordifolium (Lebanon stonecress).